Consider the following 106-residue polypeptide: Small ribosomal subunit protein bS16 (106 aa).

Belongs to the bacterial ribosomal protein bS16 family.

The polypeptide is Small ribosomal subunit protein bS16 (Protochlamydia amoebophila (strain UWE25)).